The following is a 493-amino-acid chain: Probable cytosol aminopeptidase (493 aa).

Positions 262 and 267 each coordinate Mn(2+). Lysine 274 is an active-site residue. Positions 286, 345, and 347 each coordinate Mn(2+). Arginine 349 is a catalytic residue.

The protein belongs to the peptidase M17 family. It depends on Mn(2+) as a cofactor.

It localises to the cytoplasm. The enzyme catalyses Release of an N-terminal amino acid, Xaa-|-Yaa-, in which Xaa is preferably Leu, but may be other amino acids including Pro although not Arg or Lys, and Yaa may be Pro. Amino acid amides and methyl esters are also readily hydrolyzed, but rates on arylamides are exceedingly low.. It carries out the reaction Release of an N-terminal amino acid, preferentially leucine, but not glutamic or aspartic acids.. Presumably involved in the processing and regular turnover of intracellular proteins. Catalyzes the removal of unsubstituted N-terminal amino acids from various peptides. This is Probable cytosol aminopeptidase from Cyanothece sp. (strain PCC 7425 / ATCC 29141).